Here is a 586-residue protein sequence, read N- to C-terminus: Paxillin (586 aa).

Residue methionine 1 is modified to N-acetylmethionine. Positions 3–15 (DLDALLADLESTT) match the LD motif 1 motif. The segment at 13–138 (STTSHISKRP…PSPTVMSSSL (126 aa)) is disordered. A Phosphotyrosine; by PTK6 modification is found at tyrosine 31. Over residues 45-54 (VPPPVPPPPS) the composition is skewed to pro residues. 2 positions are modified to phosphoserine: serine 83 and serine 85. Residues 86–98 (PIYSSSTKNSSAS) are compositionally biased toward low complexity. A Phosphotyrosine modification is found at tyrosine 88. Serine 106 is modified (phosphoserine). Tyrosine 118 bears the Phosphotyrosine; by PTK6 mark. A phosphoserine mark is found at serine 119, serine 126, and serine 130. Residues 121 to 137 (PNKQKSAEPSPTVMSSS) show a composition bias toward polar residues. Threonine 132 is subject to Phosphothreonine. 3 positions are modified to phosphoserine: serine 137, serine 140, and serine 143. The LD motif 2 motif lies at 144–156 (ELDRLLLELNAVQ). The residue at position 210 (tyrosine 210) is a Phosphotyrosine. A disordered region spans residues 220 to 241 (GGKAGPLMKEKPKRNGGRGLED). Positions 245–257 (SVESLLDELENSV) match the LD motif 3 motif. At serine 259 the chain carries Phosphoserine. The disordered stretch occupies residues 266-290 (VNQGEMSSPQRVTSSQQQTRISASS). A Phosphoserine; by CDK5 modification is found at serine 273. Phosphoserine occurs at positions 279, 287, 290, 301, 317, 327, and 335. The interval 291–310 (ATRELDELMASLSDFKFMAQ) is required for binding to PARVA and ILK. The short motif at 294–305 (ELDELMASLSDF) is the LD motif 4 element. The tract at residues 309–329 (AQGKTGSSSPPGGLSKPGSQL) is disordered. The segment covering 310–329 (QGKTGSSSPPGGLSKPGSQL) has biased composition (low complexity). Residues 328–340 (QLDSMLGSLQSDL) carry the LD motif 5 motif. LIM zinc-binding domains are found at residues 353–403 (CGAC…CEKD), 412–462 (CYYC…CRKD), and 471–521 (CGGC…CEVH). Serine 528 is modified (phosphoserine). One can recognise an LIM zinc-binding 4 domain in the interval 530–580 (CSGCQKPITGRCITAMAKKFHPEHFVCAFCLKQLNKGTFKEQNDKPYCQSC).

The protein belongs to the paxillin family. As to quaternary structure, interacts in vitro with VCL/vinculin as well as to the SH3 domain of SRC and, when tyrosine phosphorylated, to the SH2 domain of CRK. Interacts with GIT1. Interacts with NUDT16L1/SDOS. Interacts with PTK2/FAK1. Interacts with PTK2B/PYK2. Interacts with ASAP2. Interacts with unphosphorylated ITGA4. Interacts with RNF5. Interacts with PDCD10. Interacts with NEK3, the interaction is prolactin-dependent. Interacts with PTK6. Interacts with TGFB1I1. Interacts with SORBS1. Interacts with PARVB. Interacts (via LD motif 4) with PARVA/PARVIN. Interacts (via LD motif 4) with ILK. Interacts (via cytoplasmic domain) with CEACAM1; the interaction is phosphotyrosyl-dependent. Interacts with LIMA1; this complex stabilizes actin dynamics. Interacts with CD36 (via C-terminus). Interacts with TRIM15. Interacts with PAK4; PAK4 acts as a scaffold to suppport PAXI phosphorylation at Ser-301. Phosphorylated by MAPK1/ERK2. Phosphorylated on tyrosine residues during integrin-mediated cell adhesion, embryonic development, fibroblast transformation and following stimulation of cells by mitogens. Phosphorylation at Ser-273 by CDK5 reduces its interaction with PTK2/FAK1 in matrix-cell focal adhesions (MCFA) during oligodendrocytes (OLs) differentiation. Phosphorylation at Tyr-31 and Tyr-118 by PTK6 promote the activation of RAC1 via CRK/CrKII, thereby promoting migration and invasion. Phosphorylation at Ser-279 by SLK is required for PXN redistribution and cell motility. Phosphorylation at Ser-301 promotes focal adhesion disassembly during cell migration.

It localises to the cytoplasm. The protein resides in the cytoskeleton. Its subcellular location is the cell junction. The protein localises to the focal adhesion. It is found in the cell cortex. Cytoskeletal protein involved in actin-membrane attachment at sites of cell adhesion to the extracellular matrix (focal adhesion). Recruits other proteins such as TRIM15 to focal adhesion. This is Paxillin from Rattus norvegicus (Rat).